A 719-amino-acid chain; its full sequence is Fatty acid oxidation complex subunit alpha (719 aa).

The interval 1–190 is enoyl-CoA hydratase/isomerase; that stretch reads MVYQGNRITV…KLGLVDATVA (190 aa). Asp-298 serves as a coordination point for substrate. Residues 313–719 are 3-hydroxyacyl-CoA dehydrogenase; that stretch reads HDINEAAVLG…AAGETFYATA (407 aa). Residues Met-326, Asp-345, 402 to 404, Lys-409, and Ser-431 each bind NAD(+); that span reads VVE. The active-site For 3-hydroxyacyl-CoA dehydrogenase activity is the His-452. Asn-455 provides a ligand contact to NAD(+). Position 502 (Asn-502) interacts with substrate.

It in the N-terminal section; belongs to the enoyl-CoA hydratase/isomerase family. The protein in the C-terminal section; belongs to the 3-hydroxyacyl-CoA dehydrogenase family. In terms of assembly, heterotetramer of two alpha chains (FadB) and two beta chains (FadA).

The enzyme catalyses a (3S)-3-hydroxyacyl-CoA + NAD(+) = a 3-oxoacyl-CoA + NADH + H(+). It carries out the reaction a (3S)-3-hydroxyacyl-CoA = a (2E)-enoyl-CoA + H2O. The catalysed reaction is a 4-saturated-(3S)-3-hydroxyacyl-CoA = a (3E)-enoyl-CoA + H2O. It catalyses the reaction (3S)-3-hydroxybutanoyl-CoA = (3R)-3-hydroxybutanoyl-CoA. The enzyme catalyses a (3Z)-enoyl-CoA = a 4-saturated (2E)-enoyl-CoA. It carries out the reaction a (3E)-enoyl-CoA = a 4-saturated (2E)-enoyl-CoA. Its pathway is lipid metabolism; fatty acid beta-oxidation. Its function is as follows. Involved in the aerobic and anaerobic degradation of long-chain fatty acids via beta-oxidation cycle. Catalyzes the formation of 3-oxoacyl-CoA from enoyl-CoA via L-3-hydroxyacyl-CoA. It can also use D-3-hydroxyacyl-CoA and cis-3-enoyl-CoA as substrate. The sequence is that of Fatty acid oxidation complex subunit alpha from Psychrobacter cryohalolentis (strain ATCC BAA-1226 / DSM 17306 / VKM B-2378 / K5).